The sequence spans 451 residues: Deoxyguanosinetriphosphate triphosphohydrolase-like protein (451 aa).

In terms of domain architecture, HD spans 61 to 274 (RLTHSLEVAQ…MELADDIAYG (214 aa)).

It belongs to the dGTPase family. Type 2 subfamily.

This Actinobacillus succinogenes (strain ATCC 55618 / DSM 22257 / CCUG 43843 / 130Z) protein is Deoxyguanosinetriphosphate triphosphohydrolase-like protein.